Here is a 634-residue protein sequence, read N- to C-terminus: Growth hormone receptor (634 aa).

An N-terminal signal peptide occupies residues 1 to 18 (MDLWQLLLTLAVAGSSDA). The Extracellular segment spans residues 19–260 (FSGSEATPAF…NPSACEEDFQ (242 aa)). Residue asparagine 46 is glycosylated (N-linked (GlcNAc...) asparagine). Cysteine 56 and cysteine 66 form a disulfide bridge. The N-linked (GlcNAc...) asparagine glycan is linked to asparagine 73. Residues cysteine 97 and cysteine 108 are joined by a disulfide bond. A glycan (N-linked (GlcNAc...) asparagine) is linked at asparagine 111. Cysteine 122 and cysteine 136 are disulfide-bonded. The 104-residue stretch at 147–250 (PPVGLNWTLL…EVLLITFPQM (104 aa)) folds into the Fibronectin type-III domain. N-linked (GlcNAc...) asparagine glycans are attached at residues asparagine 152, asparagine 157, and asparagine 196. The WSXWS motif motif lies at 236–240 (YGKFS). The helical transmembrane segment at 261–284 (FPWFLIIIFGILGLAVTLYLLIFS) threads the bilayer. Topologically, residues 285–634 (KQQRIKMLIL…STDQLNKIMP (350 aa)) are cytoplasmic. The required for JAK2 binding stretch occupies residues 290 to 375 (KMLILPPVPV…HEKSLNIFGA (86 aa)). Residues 293 to 301 (ILPPVPVPK) carry the Box 1 motif motif. A UbE motif motif is present at residues 336-345 (DSWVEFIELD). At serine 337 the chain carries Phosphoserine.

It belongs to the type I cytokine receptor family. Type 1 subfamily. As to quaternary structure, on growth hormone (GH) binding, forms homodimers and binds JAK2 via a box 1-containing domain. Post-translationally, the soluble form (GHBP) is produced by phorbol ester-promoted proteolytic cleavage at the cell surface (shedding) by ADAM17/TACE. Shedding is inhibited by growth hormone (GH) binding to the receptor probably due to a conformational change in GHR rendering the receptor inaccessible to ADAM17. In terms of processing, on GH binding, phosphorylated on tyrosine residues in the cytoplasmic domain by JAK2. Ubiquitinated by the ECS(SOCS2) complex following ligand-binding and phosphorylation by JAK2, leading to its degradation by the proteasome. Regulation by the ECS(SOCS2) complex acts as a negative feedback loop of growth hormone receptor signaling. Ubiquitination is not sufficient for GHR internalization.

It localises to the cell membrane. It is found in the secreted. Its function is as follows. Receptor for pituitary gland growth hormone (GH1) involved in regulating postnatal body growth. On ligand binding, couples to the JAK2/STAT5 pathway. Functionally, the soluble form (GHBP) acts as a reservoir of growth hormone in plasma and may be a modulator/inhibitor of GH signaling. The sequence is that of Growth hormone receptor (GHR) from Bos taurus (Bovine).